The following is a 375-amino-acid chain: MAATAQYLPRNNSLPSNPLMHPDSDRMHQGTTYREVQKMMHQEYLQGLATNAGHPMSLTHHQWLPNPASDWGSGSHLGAQAEHGKSGVQSSREDLSSSFHHHRSHLVHQQTPSSHAWAQSGGHHLPPMSPGSNSHQPLIYSQSSYTNLNGMLGPQASSLHHSMRDPLHDDPGVLDTHVESPPQHLSHHQDHSDEDAPSSDDLEQFAKQFKQRRIKLGFTQADVGLALGTLYGNVFSQTTICRFEALQLSFKNMCKLKPLLNKWLEETDSTTGSPTNLDKIAAQGRKRKKRTSIEVGVKGALENHFLKCPKPSAHEITSLADSLQLEKEVVRVWFCNRRQKEKRMTPAGVPHPPMEDVYSQAETPPLHHTLQTSVQ.

Disordered stretches follow at residues 1 to 29 (MAAT…RMHQ), 56 to 139 (MSLT…QPLI), and 151 to 200 (MLGP…PSSD). Polar residues-rich tracts occupy residues 107-117 (VHQQTPSSHAW), 130-139 (PGSNSHQPLI), and 151-160 (MLGPQASSLH). Residues 162-171 (SMRDPLHDDP) are compositionally biased toward basic and acidic residues. Residues 194–268 (EDAPSSDDLE…LLNKWLEETD (75 aa)) enclose the POU-specific domain. Residues 286-345 (KRKKRTSIEVGVKGALENHFLKCPKPSAHEITSLADSLQLEKEVVRVWFCNRRQKEKRMT) constitute a DNA-binding region (homeobox).

Belongs to the POU transcription factor family. Class-3 subfamily.

The protein localises to the nucleus. Its function is as follows. Acts as a transcription factor. May play a role in neuronal differentiation. This is POU domain, class 3, transcription factor 1 from Xenopus tropicalis (Western clawed frog).